The sequence spans 318 residues: TPR repeat-containing protein MJ0940 (318 aa).

TPR repeat units lie at residues 17 to 50 (SLTY…NPDF), 84 to 117 (PVAY…EEKF), 119 to 151 (TAFF…APNF), 152 to 185 (IPAY…KEND), 186 to 219 (TNAI…LNVT), 221 to 254 (IEVI…RPDD), 255 to 288 (ASLW…MPHH), and 289 to 318 (TKAL…ALDR).

The chain is TPR repeat-containing protein MJ0940 from Methanocaldococcus jannaschii (strain ATCC 43067 / DSM 2661 / JAL-1 / JCM 10045 / NBRC 100440) (Methanococcus jannaschii).